The sequence spans 534 residues: Putative ammonium transporter 1 (534 aa).

Helical transmembrane passes span 31 to 51 (SFFLCSMALIIFFMQCGFAYL), 69 to 89 (LLDSCICIIGYWAIGWALAYG), 115 to 135 (FFFQYVFSATAATIVSGAVAE), 139 to 159 (FITYVTYCTVISTFIYPVLTH), 184 to 204 (FAGSGLVHLCGGSISFLAAWI), 223 to 243 (ILGHSVPFTALGGFILMFGFL), 263 to 283 (ALAMINTILSGAFAALIYLGV), 291 to 311 (WTLLLTINACLSGMVAACAGC), 318 to 338 (ACIWVGLGAGLIYLAFSKLMI), 346 to 366 (LDAFAVHAGGGFWGLMSSSII), and 401 to 421 (ICALAIIAWSLGVMLPIFWIL).

The protein belongs to the ammonia transporter channel (TC 1.A.11.2) family.

The protein resides in the membrane. Involved in the uptake of ammonia. The chain is Putative ammonium transporter 1 (amt-1) from Caenorhabditis elegans.